Here is a 47-residue protein sequence, read N- to C-terminus: U18-ctenitoxin-Pn1a (47 aa).

Intrachain disulfides connect cysteine 2–cysteine 16, cysteine 9–cysteine 22, cysteine 13–cysteine 46, cysteine 15–cysteine 34, and cysteine 24–cysteine 32.

Expressed by the venom gland.

The protein localises to the secreted. In terms of biological role, neurotoxin. Causes spastic paralysis and death in mice by intracerebroventricular injection at dose levels of 3 ug per mouse. This is U18-ctenitoxin-Pn1a from Phoneutria nigriventer (Brazilian armed spider).